We begin with the raw amino-acid sequence, 258 residues long: Regulatory protein RecX (258 aa).

This sequence belongs to the RecX family.

It localises to the cytoplasm. Modulates RecA activity. The polypeptide is Regulatory protein RecX (Streptococcus pyogenes serotype M3 (strain ATCC BAA-595 / MGAS315)).